A 295-amino-acid polypeptide reads, in one-letter code: Protoheme IX farnesyltransferase (295 aa).

9 helical membrane-spanning segments follow: residues 30-50, 51-71, 93-115, 119-136, 148-168, 175-195, 219-239, 244-264, and 275-295; these read LVVLTGVTGIIIAPGNIHPLI, AVISTLCIALGSGAAGAINMW, ISRSSALEVGLVLSFISVTIMMI, YISGILLAISIGFYIYVY, IVIGGAAGALPPIIGWTSVTG, LVLFLIIFMWTPPHFWALSLL, IHILVYSILLFPITLLPGLFL, LYEITAIPLGLMFVVQAFQVF, and MFTYSIIYLFILFTCIMLSSF.

Belongs to the UbiA prenyltransferase family. Protoheme IX farnesyltransferase subfamily.

Its subcellular location is the cell inner membrane. The catalysed reaction is heme b + (2E,6E)-farnesyl diphosphate + H2O = Fe(II)-heme o + diphosphate. It participates in porphyrin-containing compound metabolism; heme O biosynthesis; heme O from protoheme: step 1/1. In terms of biological role, converts heme B (protoheme IX) to heme O by substitution of the vinyl group on carbon 2 of heme B porphyrin ring with a hydroxyethyl farnesyl side group. This is Protoheme IX farnesyltransferase from Ehrlichia ruminantium (strain Welgevonden).